A 639-amino-acid polypeptide reads, in one-letter code: ATP-dependent zinc metalloprotease FtsH (639 aa).

The Cytoplasmic segment spans residues 1–4 (MNST). Residues 5–25 (VKTIVFWVFILACCILLWQVF) traverse the membrane as a helical segment. Over 26 to 104 (QRSSNTGKEQ…TVKDNSGSPW (79 aa)) the chain is Periplasmic. The helical transmembrane segment at 105-125 (WSILIQFSPVLVLVALWFFMI) threads the bilayer. Residues 126–639 (RQMQSGGNKA…GLPEGSPSPA (514 aa)) lie on the Cytoplasmic side of the membrane. 196–203 (GPPGTGKT) is a binding site for ATP. Position 418 (H418) interacts with Zn(2+). Residue E419 is part of the active site. The Zn(2+) site is built by H422 and D494. The tract at residues 597–639 (KDLPPLKPSGGSGTATTDDVQQVLKPSSDRGAGGLPEGSPSPA) is disordered.

The protein in the central section; belongs to the AAA ATPase family. This sequence in the C-terminal section; belongs to the peptidase M41 family. Homohexamer. Requires Zn(2+) as cofactor.

Its subcellular location is the cell inner membrane. In terms of biological role, acts as a processive, ATP-dependent zinc metallopeptidase for both cytoplasmic and membrane proteins. Plays a role in the quality control of integral membrane proteins. This chain is ATP-dependent zinc metalloprotease FtsH, found in Acidobacterium capsulatum (strain ATCC 51196 / DSM 11244 / BCRC 80197 / JCM 7670 / NBRC 15755 / NCIMB 13165 / 161).